We begin with the raw amino-acid sequence, 507 residues long: Phosphoenolpyruvate carboxylase (507 aa).

The disordered stretch occupies residues 1 to 25 (MHKIDRKIPNIMGTQHPDNAGVPFF).

Belongs to the PEPCase type 2 family. In terms of assembly, homotetramer. It depends on Mg(2+) as a cofactor.

It catalyses the reaction oxaloacetate + phosphate = phosphoenolpyruvate + hydrogencarbonate. Catalyzes the irreversible beta-carboxylation of phosphoenolpyruvate (PEP) to form oxaloacetate (OAA), a four-carbon dicarboxylic acid source for the tricarboxylic acid cycle. This Oenococcus oeni (strain ATCC BAA-331 / PSU-1) protein is Phosphoenolpyruvate carboxylase.